Consider the following 116-residue polypeptide: Large ribosomal subunit protein eL18 (116 aa).

Belongs to the eukaryotic ribosomal protein eL18 family. As to quaternary structure, part of the 50S ribosomal subunit. Interacts weakly with proteins L4 and L15. Has been cross-linked to L4.

Functionally, stabilizes the tertiary rRNA structure within the 23S rRNA domain (domain II) to which it binds. The sequence is that of Large ribosomal subunit protein eL18 (rpl18e) from Haloarcula marismortui (strain ATCC 43049 / DSM 3752 / JCM 8966 / VKM B-1809) (Halobacterium marismortui).